The primary structure comprises 119 residues: Beta-2-microglobulin (119 aa).

A signal peptide spans 1 to 20 (MACSVVVALLALLSLSGLEA). The Ig-like C1-type domain occupies 25–114 (PKIQVYSRHP…VTFSTPKTVK (90 aa)). Residues Cys45 and Cys100 are joined by a disulfide bond.

Belongs to the beta-2-microglobulin family. As to quaternary structure, heterodimer of an alpha chain and a beta chain. Beta-2-microglobulin is the beta-chain of major histocompatibility complex class I molecules.

It localises to the secreted. Component of the class I major histocompatibility complex (MHC). Involved in the presentation of peptide antigens to the immune system. The polypeptide is Beta-2-microglobulin (B2M) (Mico emiliae (Emilia's marmoset)).